An 84-amino-acid polypeptide reads, in one-letter code: Small ribosomal subunit protein bS20 (84 aa).

A disordered region spans residues methionine 1 to isoleucine 32.

This sequence belongs to the bacterial ribosomal protein bS20 family.

Functionally, binds directly to 16S ribosomal RNA. The sequence is that of Small ribosomal subunit protein bS20 from Salinibacter ruber (strain DSM 13855 / M31).